Reading from the N-terminus, the 336-residue chain is tRNA N6-adenosine threonylcarbamoyltransferase (336 aa).

2 residues coordinate Fe cation: His114 and His118. Substrate-binding positions include 136-140 (LVSGG), Asp169, Gly182, Asp186, and Asn275. Asp301 is a Fe cation binding site.

It belongs to the KAE1 / TsaD family. Fe(2+) serves as cofactor.

Its subcellular location is the cytoplasm. The catalysed reaction is L-threonylcarbamoyladenylate + adenosine(37) in tRNA = N(6)-L-threonylcarbamoyladenosine(37) in tRNA + AMP + H(+). Required for the formation of a threonylcarbamoyl group on adenosine at position 37 (t(6)A37) in tRNAs that read codons beginning with adenine. Is involved in the transfer of the threonylcarbamoyl moiety of threonylcarbamoyl-AMP (TC-AMP) to the N6 group of A37, together with TsaE and TsaB. TsaD likely plays a direct catalytic role in this reaction. The chain is tRNA N6-adenosine threonylcarbamoyltransferase from Streptococcus sanguinis (strain SK36).